The sequence spans 185 residues: Neuronal vesicle trafficking-associated protein 1 (185 aa).

The Cytoplasmic segment spans residues 1 to 82; sequence MVKLGNNFAE…ITEGVTERFK (82 aa). Residues 83–103 traverse the membrane as a helical; Signal-anchor for type II membrane protein segment; sequence VSVLVLFALAFLTCVVFLVVY. Residues 104–185 lie on the Lumenal side of the membrane; the sequence is KVYKYDRACP…QETEAAEKSA (82 aa). The interval 129–164 is required for GRIP1 interaction; it reads ESYYAEQDSSAREKFYTVINHYNLAKQSITRSVSPW.

This sequence belongs to the NSG family. In terms of assembly, forms a complex with GRIP1, GRIA2 and STX12 through direct interaction with GRIP1; controls the intracellular fate of AMPAR and the endosomal sorting of the GRIA2 subunit toward recycling and membrane targeting. Interacts with STX12. Interacts with APP; could regulate APP processing. Interacts with FAM171A1.

Its subcellular location is the membrane. It is found in the golgi apparatus. The protein localises to the trans-Golgi network membrane. It localises to the endosome membrane. The protein resides in the cell projection. Its subcellular location is the dendrite. It is found in the early endosome membrane. The protein localises to the late endosome membrane. It localises to the lysosome lumen. The protein resides in the recycling endosome membrane. Its subcellular location is the cytoplasmic vesicle membrane. It is found in the golgi stack membrane. The protein localises to the endosome. It localises to the multivesicular body membrane. The protein resides in the endoplasmic reticulum membrane. Plays a role in the recycling mechanism in neurons of multiple receptors, including AMPAR, APP and L1CAM and acts at the level of early endosomes to promote sorting of receptors toward a recycling pathway. Regulates sorting and recycling of GRIA2 through interaction with GRIP1 and then contributes to the regulation of synaptic transmission and plasticity by affecting the recycling and targeting of AMPA receptors to the synapse. Is required for faithful sorting of L1CAM to axons by facilitating trafficking from somatodendritic early endosome or the recycling endosome. In an other hand, induces apoptosis via the activation of CASP3 in response to DNA damage. This chain is Neuronal vesicle trafficking-associated protein 1, found in Macaca fascicularis (Crab-eating macaque).